The primary structure comprises 908 residues: NADH-quinone oxidoreductase subunit G (908 aa).

The 2Fe-2S ferredoxin-type domain occupies 2-83 (ATIHVDGKEY…GTFISIDDEE (82 aa)). Residues Cys34, Cys45, Cys48, and Cys67 each coordinate [2Fe-2S] cluster. The 4Fe-4S His(Cys)3-ligated-type domain maps to 83–122 (EAKQFRESVVEWLMTNHPHDCPVCEEGGNCHLQDMTVMTG). The [4Fe-4S] cluster site is built by His99, Cys103, Cys106, Cys112, Cys151, Cys154, Cys157, Cys201, Cys228, Cys231, Cys235, and Cys263. Residues 221–277 (MQFAPSICQQCSIGCNISPGERYGELRRIENRYNGTVNHYFLCDRGRFGYGYVNLKD) enclose the 4Fe-4S Mo/W bis-MGD-type domain.

It belongs to the complex I 75 kDa subunit family. As to quaternary structure, composed of 13 different subunits. Subunits NuoCD, E, F, and G constitute the peripheral sector of the complex. It depends on [2Fe-2S] cluster as a cofactor. Requires [4Fe-4S] cluster as cofactor.

It catalyses the reaction a quinone + NADH + 5 H(+)(in) = a quinol + NAD(+) + 4 H(+)(out). NDH-1 shuttles electrons from NADH, via FMN and iron-sulfur (Fe-S) centers, to quinones in the respiratory chain. The immediate electron acceptor for the enzyme in this species is believed to be ubiquinone. Couples the redox reaction to proton translocation (for every two electrons transferred, four hydrogen ions are translocated across the cytoplasmic membrane), and thus conserves the redox energy in a proton gradient. The chain is NADH-quinone oxidoreductase subunit G (nuoG) from Escherichia coli O157:H7.